A 445-amino-acid chain; its full sequence is Phosphoglucosamine mutase (445 aa).

Ser-102 acts as the Phosphoserine intermediate in catalysis. Residues Ser-102, Asp-241, Asp-243, and Asp-245 each contribute to the Mg(2+) site. Ser-102 carries the phosphoserine modification.

Belongs to the phosphohexose mutase family. It depends on Mg(2+) as a cofactor. In terms of processing, activated by phosphorylation.

It catalyses the reaction alpha-D-glucosamine 1-phosphate = D-glucosamine 6-phosphate. Catalyzes the conversion of glucosamine-6-phosphate to glucosamine-1-phosphate. The sequence is that of Phosphoglucosamine mutase from Escherichia coli (strain 55989 / EAEC).